A 482-amino-acid polypeptide reads, in one-letter code: Adenylyltransferase and sulfurtransferase MOCS3-2 (482 aa).

ATP contacts are provided by residues glycine 125, aspartate 146, 153-157 (NNLHR), lysine 170, and 214-215 (DN). Residues cysteine 255 and cysteine 258 each coordinate Zn(2+). Cysteine 272 functions as the Glycyl thioester intermediate; for adenylyltransferase activity in the catalytic mechanism. Positions 330 and 333 each coordinate Zn(2+). Positions 385-480 (DGEPHLLLDV…WGQDVDPDFP (96 aa)) constitute a Rhodanese domain. Cysteine 440 functions as the Cysteine persulfide intermediate; for sulfurtransferase activity in the catalytic mechanism.

It in the N-terminal section; belongs to the HesA/MoeB/ThiF family. UBA4 subfamily. It depends on Zn(2+) as a cofactor.

It localises to the cytoplasm. The enzyme catalyses [molybdopterin-synthase sulfur-carrier protein]-C-terminal Gly-Gly + ATP + H(+) = [molybdopterin-synthase sulfur-carrier protein]-C-terminal Gly-Gly-AMP + diphosphate. It catalyses the reaction [molybdopterin-synthase sulfur-carrier protein]-C-terminal Gly-Gly-AMP + S-sulfanyl-L-cysteinyl-[cysteine desulfurase] + AH2 = [molybdopterin-synthase sulfur-carrier protein]-C-terminal-Gly-aminoethanethioate + L-cysteinyl-[cysteine desulfurase] + A + AMP + 2 H(+). The protein operates within tRNA modification; 5-methoxycarbonylmethyl-2-thiouridine-tRNA biosynthesis. It participates in cofactor biosynthesis; molybdopterin biosynthesis. Functionally, plays a central role in 2-thiolation of mcm(5)S(2)U at tRNA wobble positions of cytosolic tRNA(Lys), tRNA(Glu) and tRNA(Gln). Also essential during biosynthesis of the molybdenum cofactor. Acts by mediating the C-terminal thiocarboxylation of sulfur carriers URM1 and MOCS2A. Its N-terminus first activates URM1 and MOCS2A as acyl-adenylates (-COAMP), then the persulfide sulfur on the catalytic cysteine is transferred to URM1 and MOCS2A to form thiocarboxylation (-COSH) of their C-terminus. The reaction probably involves hydrogen sulfide that is generated from the persulfide intermediate and that acts as a nucleophile towards URM1 and MOCS2A. Subsequently, a transient disulfide bond is formed. Does not use thiosulfate as sulfur donor; NFS1 probably acting as a sulfur donor for thiocarboxylation reactions. The polypeptide is Adenylyltransferase and sulfurtransferase MOCS3-2 (Zea mays (Maize)).